The primary structure comprises 371 residues: uncharacterized protein (371 aa).

In terms of domain architecture, 4Fe-4S ferredoxin-type spans 110–140 (MEKFIDFDRCNKCGECARKICKAKWTPLNYL).

This is an uncharacterized protein from Methanocaldococcus jannaschii (strain ATCC 43067 / DSM 2661 / JAL-1 / JCM 10045 / NBRC 100440) (Methanococcus jannaschii).